A 366-amino-acid chain; its full sequence is Bacteriochlorophyll a protein (366 aa).

Positions 110, 145, 290, 297, and 298 each coordinate bacteriochlorophyll a.

Homotrimer. Each subunit contains 7 molecules of bacteriochlorophyll a.

Its function is as follows. Intermediary in the transfer of excitation energy from the chlorophyll to the reaction centers. The protein is Bacteriochlorophyll a protein of Prosthecochloris aestuarii.